Here is a 478-residue protein sequence, read N- to C-terminus: Cytochrome c-552 (478 aa).

A signal peptide spans 1 to 26 (MARKTLRARRFFSLIFPFFFITSVYA). Histidine 94 contributes to the heme c binding site. Heme is bound by residues cysteine 122, cysteine 125, and lysine 126. Residues cysteine 160, cysteine 163, histidine 164, cysteine 209, cysteine 212, and histidine 213 each coordinate heme c. Glutamate 215, tyrosine 216, lysine 261, and glutamine 263 together coordinate Ca(2+). Substrate is bound at residue tyrosine 216. Residue histidine 264 participates in substrate binding. Histidine 275, cysteine 282, cysteine 285, histidine 286, histidine 301, cysteine 314, cysteine 317, histidine 318, and histidine 393 together coordinate heme c.

This sequence belongs to the cytochrome c-552 family. Ca(2+) serves as cofactor. The cofactor is heme c.

The protein resides in the periplasm. It catalyses the reaction 6 Fe(III)-[cytochrome c] + NH4(+) + 2 H2O = 6 Fe(II)-[cytochrome c] + nitrite + 8 H(+). It participates in nitrogen metabolism; nitrate reduction (assimilation). Functionally, catalyzes the reduction of nitrite to ammonia, consuming six electrons in the process. In Salmonella paratyphi A (strain ATCC 9150 / SARB42), this protein is Cytochrome c-552.